We begin with the raw amino-acid sequence, 333 residues long: Nucleoid-associated protein (333 aa).

This sequence belongs to the YejK family.

The protein localises to the cytoplasm. The protein resides in the nucleoid. In Metapseudomonas resinovorans (Pseudomonas resinovorans), this protein is Nucleoid-associated protein.